The sequence spans 228 residues: 3,4-dihydroxy-2-butanone 4-phosphate synthase (228 aa).

Residues 37–38 (RE), D42, 150–154 (RRGHT), and E174 contribute to the D-ribulose 5-phosphate site. Position 38 (E38) interacts with Mg(2+). H153 contacts Mg(2+).

Belongs to the DHBP synthase family. As to quaternary structure, homodimer. The cofactor is Mg(2+). Mn(2+) serves as cofactor.

The enzyme catalyses D-ribulose 5-phosphate = (2S)-2-hydroxy-3-oxobutyl phosphate + formate + H(+). Its pathway is cofactor biosynthesis; riboflavin biosynthesis; 2-hydroxy-3-oxobutyl phosphate from D-ribulose 5-phosphate: step 1/1. Its function is as follows. Catalyzes the conversion of D-ribulose 5-phosphate to formate and 3,4-dihydroxy-2-butanone 4-phosphate. The sequence is that of 3,4-dihydroxy-2-butanone 4-phosphate synthase from Photobacterium profundum (strain SS9).